A 147-amino-acid chain; its full sequence is Leghemoglobin 8 (147 aa).

In terms of domain architecture, Globin spans 2–147; the sequence is GFTEKQESLV…LAASIKKSMS (146 aa). A nitrated tyrosine mark is found at Y25 and Y30. Residue S45 coordinates heme b. At S45 the chain carries Phosphoserine. Residue H62 coordinates O2. The heme b site is built by K65, H94, and K97. Y135 is subject to Nitrated tyrosine.

This sequence belongs to the plant globin family. As to quaternary structure, monomer. Interacts with CAS31 in the cytoplasm; this interaction leads to its protection from denaturation under thermal and drought stresses. In terms of processing, nitrated in effective nodules and particularly in hypoxic conditions; this mechanism may play a protective role in the symbiosis by buffering toxic peroxynitrite NO(2)(-). Nitration level decrease during nodule senescence. Post-translationally, phosphorylation at Ser-45 disrupts the molecular environment of its porphyrin ring oxygen binding pocket, thus leading to a reduced oxygen consumption and to the delivery of oxygen O(2) to symbiosomes. Root nodules.

It is found in the cytoplasm. The protein localises to the nucleus. In terms of biological role, leghemoglobin that reversibly binds oxygen O(2) through a pentacoordinated heme iron. In root nodules, facilitates the diffusion of oxygen to the bacteroids while preventing the bacterial nitrogenase from being inactivated by buffering dioxygen, nitric oxide and carbon monoxide, and promoting the formation of reactive oxygen species (ROS, e.g. H(2)O(2)). This role is essential for symbiotic nitrogen fixation (SNF). The chain is Leghemoglobin 8 from Medicago truncatula (Barrel medic).